The chain runs to 359 residues: MSTPTLPDMVAPSPRVRVKDRCRRMMGDLRLSVIDQCNLRCRYCMPEEHYTWLPRQDLLSVKEISAIVDVFLSVGVSKVRITGGEPLIRPDLPEIVRTLSAKVGEDSGLRDLAITTNGVLLADRVDGLKAAGMKRITVSLDTLQPERFKAISQRNSHDKVIAGIKAVAAAGFTDTKIDTTVMRGANHDELADLIEFARTVNAEVRFIEYMDVGGATHWAWEKVFTKANMLESLEKRYGRIEPLPKHDTAPANRYALPDGTTFGIIASTTEPFCATCDRSRLTADGLWLHCLYAISGINLREPLRAGATHDDLVETVTTGWRRRTDRGAEQRLAQRERGVFLPLSTLKADPHLEMHTRGG.

The Radical SAM core domain maps to 21-241; sequence RCRRMMGDLR…SLEKRYGRIE (221 aa). Arginine 30 contacts GTP. Residues cysteine 37 and cysteine 41 each contribute to the [4Fe-4S] cluster site. Tyrosine 43 contributes to the S-adenosyl-L-methionine binding site. Residue cysteine 44 coordinates [4Fe-4S] cluster. Arginine 80 lines the GTP pocket. Glycine 84 is an S-adenosyl-L-methionine binding site. Threonine 115 provides a ligand contact to GTP. Serine 139 lines the S-adenosyl-L-methionine pocket. Lysine 176 is a GTP binding site. Position 210 (methionine 210) interacts with S-adenosyl-L-methionine. Residues cysteine 273 and cysteine 276 each coordinate [4Fe-4S] cluster. Residue 278-280 participates in GTP binding; the sequence is RSR. Cysteine 290 lines the [4Fe-4S] cluster pocket.

It belongs to the radical SAM superfamily. MoaA family. Monomer and homodimer. Requires [4Fe-4S] cluster as cofactor.

The enzyme catalyses GTP + AH2 + S-adenosyl-L-methionine = (8S)-3',8-cyclo-7,8-dihydroguanosine 5'-triphosphate + 5'-deoxyadenosine + L-methionine + A + H(+). It functions in the pathway cofactor biosynthesis; molybdopterin biosynthesis. Functionally, catalyzes the cyclization of GTP to (8S)-3',8-cyclo-7,8-dihydroguanosine 5'-triphosphate. The polypeptide is GTP 3',8-cyclase 1 (Mycobacterium tuberculosis (strain CDC 1551 / Oshkosh)).